A 270-amino-acid polypeptide reads, in one-letter code: Formamidopyrimidine-DNA glycosylase (270 aa).

The Schiff-base intermediate with DNA role is filled by proline 2. Glutamate 3 (proton donor) is an active-site residue. The Proton donor; for beta-elimination activity role is filled by lysine 57. DNA-binding residues include histidine 90, arginine 109, and lysine 150. The FPG-type zinc finger occupies 235–269 (LVYGNKDKPCPRCGTKIKSIIIGQRNSFFCPQCQK). The Proton donor; for delta-elimination activity role is filled by arginine 259.

It belongs to the FPG family. As to quaternary structure, monomer. It depends on Zn(2+) as a cofactor.

It catalyses the reaction Hydrolysis of DNA containing ring-opened 7-methylguanine residues, releasing 2,6-diamino-4-hydroxy-5-(N-methyl)formamidopyrimidine.. The catalysed reaction is 2'-deoxyribonucleotide-(2'-deoxyribose 5'-phosphate)-2'-deoxyribonucleotide-DNA = a 3'-end 2'-deoxyribonucleotide-(2,3-dehydro-2,3-deoxyribose 5'-phosphate)-DNA + a 5'-end 5'-phospho-2'-deoxyribonucleoside-DNA + H(+). In terms of biological role, involved in base excision repair of DNA damaged by oxidation or by mutagenic agents. Acts as a DNA glycosylase that recognizes and removes damaged bases. Has a preference for oxidized purines, such as 7,8-dihydro-8-oxoguanine (8-oxoG). Has AP (apurinic/apyrimidinic) lyase activity and introduces nicks in the DNA strand. Cleaves the DNA backbone by beta-delta elimination to generate a single-strand break at the site of the removed base with both 3'- and 5'-phosphates. The sequence is that of Formamidopyrimidine-DNA glycosylase from Histophilus somni (strain 129Pt) (Haemophilus somnus).